A 216-amino-acid polypeptide reads, in one-letter code: Ribonuclease HII (216 aa).

Residues 27 to 216 form the RNase H type-2 domain; sequence ASLAGVDEAG…VKEHVKNCEG (190 aa). Residues D33, E34, and D125 each contribute to the a divalent metal cation site.

Belongs to the RNase HII family. Mn(2+) serves as cofactor. The cofactor is Mg(2+).

The protein localises to the cytoplasm. It catalyses the reaction Endonucleolytic cleavage to 5'-phosphomonoester.. Its function is as follows. Endonuclease that specifically degrades the RNA of RNA-DNA hybrids. This is Ribonuclease HII from Geotalea daltonii (strain DSM 22248 / JCM 15807 / FRC-32) (Geobacter daltonii).